The chain runs to 107 residues: UPF0473 protein LACR_0139 (107 aa).

It belongs to the UPF0473 family.

The protein is UPF0473 protein LACR_0139 of Lactococcus lactis subsp. cremoris (strain SK11).